A 339-amino-acid chain; its full sequence is Casein kinase II subunit alpha' (339 aa).

In terms of domain architecture, Protein kinase spans 50–334 (YEIINKIGRG…AKEAMDHKFF (285 aa)). Residues 56-64 (IGRGKYSEV) and K79 contribute to the ATP site. Residue D167 is the Proton acceptor of the active site.

The protein belongs to the protein kinase superfamily. Ser/Thr protein kinase family. CK2 subfamily. In terms of assembly, tetramer composed of an alpha chain, an alpha', one beta chain and one beta' chain. Interacts with FACT subunits POB3 and SPT16. Interacts with NAP1. Interacts with YTA7.

It catalyses the reaction L-seryl-[protein] + ATP = O-phospho-L-seryl-[protein] + ADP + H(+). It carries out the reaction L-threonyl-[protein] + ATP = O-phospho-L-threonyl-[protein] + ADP + H(+). Functionally, catalytic subunit of a constitutively active serine/threonine-protein kinase complex that phosphorylates a large number of substrates containing acidic residues C-terminal to the phosphorylated serine or threonine. Phosphorylates YTA7 during S-phase to promote transcription of histones. This is Casein kinase II subunit alpha' from Saccharomyces cerevisiae (strain ATCC 204508 / S288c) (Baker's yeast).